Consider the following 393-residue polypeptide: Dual specificity mitogen-activated protein kinase kinase 1 (393 aa).

Residues 1 to 27 (MPKKKPTPIQLNPAPDGSAVNGTSSAE) are disordered. Residues 68-361 (FEKISELGAG…LKQLMVHAFI (294 aa)) form the Protein kinase domain. ATP is bound by residues 74-82 (LGAGNGGVV) and K97. D190 serves as the catalytic Proton acceptor. A phosphoserine; by RAF mark is found at S218 and S222. An RAF1-binding region spans residues 270-307 (ELELMFGCQVEGDAAETPPRPRTPGRPLSSYGMDSRPP). Position 286 is a phosphothreonine (T286). Position 292 is a phosphothreonine; by MAPK1 (T292). S298 carries the post-translational modification Phosphoserine; by PAK.

It belongs to the protein kinase superfamily. STE Ser/Thr protein kinase family. MAP kinase kinase subfamily. As to quaternary structure, found in a complex with at least BRAF, HRAS, MAP2K1, MAPK3/ERK1 and RGS14. Forms a heterodimer with MAP2K2/MEK2. Forms heterodimers with KSR2 which further dimerize to form tetramers. Interacts with KSR1 or KSR2 and BRAF; the interaction with KSR1 or KSR2 mediates KSR1-BRAF or KSR2-BRAF dimerization. Interacts with ARBB2, LAMTOR3, MAPK1/ERK2 and RAF1. Interacts with MAPK1/ERK2. Interacts with MORG1. Interacts with PPARG. Interacts with isoform 1 of VRK2. Interacts with SGK1. Interacts with BIRC6/bruce. Interacts with KAT7; the interaction promotes KAT7 phosphorylation. Interacts with RAF1 and NEK10; the interaction is required for ERK1/2-signaling pathway activation in response to UV irradiation. Interacts with TRAF3IP3. Interacts with MOS. Phosphorylation at Ser-218 and Ser-222 by MAP kinase kinase kinases (BRAF or MEKK1) positively regulates the kinase activity. Also phosphorylated at Thr-292 by MAPK1/ERK2 and at Ser-298 by PAK. MAPK1/ERK2 phosphorylation of Thr-292 occurs in response to cellular adhesion and leads to inhibition of Ser-298 phosphorylation by PAK. Autophosphorylated at Ser-218 and Ser-222, autophosphosphorylation is promoted by NEK10 following UV irradiation.

It localises to the cytoplasm. Its subcellular location is the cytoskeleton. It is found in the microtubule organizing center. The protein resides in the centrosome. The protein localises to the spindle pole body. It localises to the nucleus. Its subcellular location is the membrane. The catalysed reaction is L-seryl-[protein] + ATP = O-phospho-L-seryl-[protein] + ADP + H(+). It carries out the reaction L-threonyl-[protein] + ATP = O-phospho-L-threonyl-[protein] + ADP + H(+). The enzyme catalyses L-tyrosyl-[protein] + ATP = O-phospho-L-tyrosyl-[protein] + ADP + H(+). Ras proteins such as HRAS mediate the activation of RAF proteins such as RAF1 or BRAF which in turn activate extracellular signal-regulated kinases (ERK) through MAPK (mitogen-activated protein kinases) and ERK kinases MAP2K1/MEK1 and MAP2K2/MEK2. Activation occurs through phosphorylation of Ser-218 and Ser-222. MAP2K1/MEK1 binds KSR1 or KSR2 releasing the inhibitory intramolecular interaction between KSR1 or KSR2 protein kinase and N-terminal domains. This allows KSR1 or KSR2 dimerization with BRAF leading to BRAF activation and phosphorylation of MAP2K1. MAP2K1/MEK1 is also the target of negative feed-back regulation by its substrate kinases, such as MAPK1/ERK2. These phosphorylate MAP2K1/MEK1 on Thr-292, thereby facilitating dephosphorylation of the activating residues Ser-218 and Ser-222. Inhibited by serine/threonine phosphatase 2A. Functionally, dual specificity protein kinase which acts as an essential component of the MAP kinase signal transduction pathway. Binding of extracellular ligands such as growth factors, cytokines and hormones to their cell-surface receptors activates RAS and this initiates RAF1 activation. RAF1 then further activates the dual-specificity protein kinases MAP2K1/MEK1 and MAP2K2/MEK2. Both MAP2K1/MEK1 and MAP2K2/MEK2 function specifically in the MAPK/ERK cascade, and catalyze the concomitant phosphorylation of a threonine and a tyrosine residue in a Thr-Glu-Tyr sequence located in the extracellular signal-regulated kinases MAPK3/ERK1 and MAPK1/ERK2, leading to their activation and further transduction of the signal within the MAPK/ERK cascade. Activates BRAF in a KSR1 or KSR2-dependent manner; by binding to KSR1 or KSR2 releases the inhibitory intramolecular interaction between KSR1 or KSR2 protein kinase and N-terminal domains which promotes KSR1 or KSR2-BRAF dimerization and BRAF activation. Depending on the cellular context, this pathway mediates diverse biological functions such as cell growth, adhesion, survival and differentiation, predominantly through the regulation of transcription, metabolism and cytoskeletal rearrangements. One target of the MAPK/ERK cascade is peroxisome proliferator-activated receptor gamma (PPARG), a nuclear receptor that promotes differentiation and apoptosis. MAP2K1/MEK1 has been shown to export PPARG from the nucleus. The MAPK/ERK cascade is also involved in the regulation of endosomal dynamics, including lysosome processing and endosome cycling through the perinuclear recycling compartment (PNRC), as well as in the fragmentation of the Golgi apparatus during mitosis. The protein is Dual specificity mitogen-activated protein kinase kinase 1 (MAP2K1) of Pan troglodytes (Chimpanzee).